The chain runs to 644 residues: uncharacterized protein (644 aa).

Disordered stretches follow at residues 1 to 35 (MSSH…EYCS) and 48 to 106 (GNSH…SHHN). A Phosphoserine modification is found at Ser-28. Residues 58 to 70 (NGASSSNNNVAKS) show a composition bias toward low complexity. Over residues 83-106 (YDSTSNSNEPISFNEPDSSNSHHN) the composition is skewed to polar residues. 12 consecutive transmembrane segments (helical) span residues 131–151 (ILPL…PLLF), 190–210 (AAFG…YGTM), 218–238 (LVLF…LYQS), 245–265 (YFVL…TVVA), 286–306 (LNFA…GFIV), 314–334 (YVFY…WLIL), 398–418 (VLLA…MGLL), 435–455 (LILS…FPLL), 522–542 (VWNA…LAVA), 546–566 (VALF…PCVQ), 583–603 (AAFA…YAFV), and 614–634 (NMIF…IFFM).

It is found in the membrane. This is an uncharacterized protein from Schizosaccharomyces pombe (strain 972 / ATCC 24843) (Fission yeast).